A 206-amino-acid chain; its full sequence is LexA repressor (206 aa).

The segment at residues 28-48 is a DNA-binding region (H-T-H motif); the sequence is RAEIATRLGFKSANAAEEHLK. Active-site for autocatalytic cleavage activity residues include Ser-123 and Lys-160.

Belongs to the peptidase S24 family. Homodimer.

It catalyses the reaction Hydrolysis of Ala-|-Gly bond in repressor LexA.. In terms of biological role, represses a number of genes involved in the response to DNA damage (SOS response), including recA and lexA. In the presence of single-stranded DNA, RecA interacts with LexA causing an autocatalytic cleavage which disrupts the DNA-binding part of LexA, leading to derepression of the SOS regulon and eventually DNA repair. The protein is LexA repressor of Shewanella oneidensis (strain ATCC 700550 / JCM 31522 / CIP 106686 / LMG 19005 / NCIMB 14063 / MR-1).